Reading from the N-terminus, the 1638-residue chain is Chromatin-remodeling ATPase INO80 (1638 aa).

The disordered stretch occupies residues 41 to 93 (SLRKPLSSDEETDDEHVVKREHDVQDSDDSSTVGVVRMKQSSKRKSRLLASKE). 2 positions are modified to phosphoserine: Ser47 and Ser48. Thr52 carries the phosphothreonine modification. The span at 55 to 65 (EHVVKREHDVQ) shows a compositional bias: basic and acidic residues. Residues Ser67 and Ser70 each carry the phosphoserine modification. Positions 136–161 (VQQLLREHVREQRQRKNYYKKAANAQ) form a coiled coil. The interval 201 to 259 (RLAEAQAGPKPPKQRRRGRKKRDNMGSPESGEVPPSELGKYTFGDTLPNNEDDDEDGGE) is disordered. The segment covering 212–222 (PKQRRRGRKKR) has biased composition (basic residues). Phosphoserine is present on residues Ser227 and Ser230. The segment covering 250 to 259 (NEDDDEDGGE) has biased composition (acidic residues). Residues 313–438 (IWQIMSKKES…AHFMSKKLGQ (126 aa)) enclose the DBINO domain. Residues 499 to 528 (KEKEEEEQAQESVEDIKPEPRPEMKDLPQP) are disordered. Acidic residues predominate over residues 502–511 (EEEEQAQESV). Positions 512–526 (EDIKPEPRPEMKDLP) are enriched in basic and acidic residues. Residues 547 to 718 (ANIYDQGISG…WALLHFIMPT (172 aa)) enclose the Helicase ATP-binding domain. ATP is bound at residue 560-567 (DEMGLGKT). The Helicase C-terminal domain maps to 1160 to 1315 (VLDNLLTRLK…GGNFKPDTLK (156 aa)). Disordered stretches follow at residues 1335-1364 (QEAK…DVNM) and 1463-1638 (FLDD…VGPE). A compositionally biased stretch (polar residues) spans 1338–1350 (KLQSSSPIPAATQ). Basic residues predominate over residues 1473-1495 (MRRRHHPRGTRRGRPRGSTRRGG). Low complexity-rich tracts occupy residues 1505–1534 (TPTQ…GTSS) and 1618–1627 (SPATSRAPSP).

Belongs to the SNF2/RAD54 helicase family. Component of the chromatin remodeling Ino80 complex.

The protein resides in the nucleus. The catalysed reaction is ATP + H2O = ADP + phosphate + H(+). Its function is as follows. ATPase component of the chromatin remodeling INO80 complex which is involved in transcriptional regulation, DNA replication and DNA repair. Binds DNA. As part of the INO80 complex, remodels chromatin by shifting nucleosomes. This chain is Chromatin-remodeling ATPase INO80, found in Drosophila melanogaster (Fruit fly).